The chain runs to 472 residues: Glycerol-3-phosphate acyltransferase, chloroplastic (472 aa).

The transit peptide at 1–102 (MLVLSSSAPP…EIPVKKEDDN (102 aa)) directs the protein to the chloroplast. The short motif at 241-246 (HQSEAD) is the HXXXXD motif element.

The protein belongs to the GPAT/DAPAT family.

The protein localises to the plastid. It is found in the chloroplast stroma. The catalysed reaction is sn-glycerol 3-phosphate + an acyl-CoA = a 1-acyl-sn-glycero-3-phosphate + CoA. Its pathway is phospholipid metabolism; CDP-diacylglycerol biosynthesis; CDP-diacylglycerol from sn-glycerol 3-phosphate: step 1/3. Its function is as follows. Esterifies acyl-group from acyl-ACP to the sn-1 position of glycerol-3-phosphate. The enzyme from chilling-resistant plants discriminates against non-fluid palmitic acid and selects oleic acid whereas the enzyme from sensitive plants accepts both fatty acids. This is an oleate-selective acyltransferase. This chain is Glycerol-3-phosphate acyltransferase, chloroplastic (GAT), found in Spinacia oleracea (Spinach).